A 689-amino-acid chain; its full sequence is MSEKTFLVEIGTEELPPKALRSLAESFAANFTAELDNAGLAHGKVEWFAAPRRLALKVANLAESQPDREVEKRGPAIAQAFDAEGKPSKAAEGWARGCGITVDQAERLKTDKGEWLLYRAHVKGESTEALVPNMVATSLAKLPIPKLMRWGASDVHFVRPVHTVTLLLGDNVIPATILGIQSDRVIRGHRFMGEPEFTIDTADQYPQILLERGKVIADYEARKAKIKADAEEAARKIGGNADLSESLLEEVASLVEWPVVLTAKFEEKFLAVPAEALVYTMKGDQKYFPVYDNAGKLLPNFIFVANIESTDPQQIISGNEKVVRPRLADAEFFFNTDRKKRLEDHLPRLQTVLFQQQLGTLRDKTDRIQALAGWIAGQIGADVNHATRAGLLSKCDLMTNMVFEFTDTQGVMGMHYARHDGEAEDVAVALNEQYQPRFAGDDLPSNPVACALAIADKMDTLAGIFGIGQHPKGDKDPFALRRAALGVLRIIVEKNLALDLQTLTEEAVRLYGDKLTNANVVDDVIDFMLGRFRAWYQDEGYTVDTIQAVLARRPTRPADFDARMKAVSHFRTLEEASALAAANKRVSNILAKATEPLNDIVHASVLKEAAEIELARHLVVLRDKLQPYFADGRYQEALIELAALRAPVDEFFENVMVNAEEKDIRINRLTLLSKLRELFLQVADISLLQ.

This sequence belongs to the class-II aminoacyl-tRNA synthetase family. As to quaternary structure, tetramer of two alpha and two beta subunits.

The protein resides in the cytoplasm. The enzyme catalyses tRNA(Gly) + glycine + ATP = glycyl-tRNA(Gly) + AMP + diphosphate. This Salmonella arizonae (strain ATCC BAA-731 / CDC346-86 / RSK2980) protein is Glycine--tRNA ligase beta subunit.